Consider the following 566-residue polypeptide: Arginine--tRNA ligase (566 aa).

The 'HIGH' region motif lies at A121–H131.

It belongs to the class-I aminoacyl-tRNA synthetase family.

It localises to the cytoplasm. The catalysed reaction is tRNA(Arg) + L-arginine + ATP = L-arginyl-tRNA(Arg) + AMP + diphosphate. This Methanococcus maripaludis (strain C7 / ATCC BAA-1331) protein is Arginine--tRNA ligase.